A 350-amino-acid polypeptide reads, in one-letter code: MNEFFKKISGLFVPPPESTVSVRGQGFQFKVPRGQTILESALHQGIAFPHDCKVGSCGTCKYKLISGRVNELTSSAMGLSGDLYQSGYRLGCQCIPKEDLEIELDTVLGQALVPIETSALISKQKRLAHDIVEMEVVPDKQIAFYPGQYADVECAECSAVRSYSFSAPPQPDGSLSFHVRLVPGGVFSGWLFGGDRTGATLTLRAPYGQFGLHESNATMVCVAGGTGLAPIKCVLQSMTQAQRERDVLLFFGARQQRDLYCLDEIEALQLDWGGRFELIPVLSEESSTSSWKGKRGMVTEYFKEYLTGQPYEGYLCGPPPMVDAAETELVRLGVARELVFADRFYNRPPC.

The 2Fe-2S ferredoxin-type domain maps to 16 to 108 (PESTVSVRGQ…DLEIELDTVL (93 aa)). [2Fe-2S] cluster-binding residues include C52, C57, C60, and C92. A ferredoxin--NADH reductase region spans residues 109–350 (GQALVPIETS…ADRFYNRPPC (242 aa)). The region spanning 114 to 213 (PIETSALISK…RAPYGQFGLH (100 aa)) is the FAD-binding FR-type domain.

It belongs to the bacterial ring-hydroxylating dioxygenase ferredoxin reductase family. As to quaternary structure, monomer. The xylene/toluene monooxygenase is composed of two subunits: the electron transfer component XylA and the hydroxylase component XylM. Requires FAD as cofactor. The cofactor is [2Fe-2S] cluster.

Its subcellular location is the cell inner membrane. The catalysed reaction is 2 reduced [2Fe-2S]-[ferredoxin] + NAD(+) + H(+) = 2 oxidized [2Fe-2S]-[ferredoxin] + NADH. With respect to regulation, the reductase activity is completely inhibited by quercetin (a common inhibitor of mammalian oxidoreductases) and p-chloromercuribenzoate, but not by iodoacetimide, N-ethylmaleimide and pyrrazole. Component of a monooxygenase that catalyzes the first step in the degradation of xylenes and toluenes. XylA is responsible for the transport of electrons from the electron donor NADH to the terminal hydroxylase component, XylM. This chain is Xylene/toluene monooxygenase electron transfer component XylA, found in Pseudomonas putida (Arthrobacter siderocapsulatus).